A 957-amino-acid polypeptide reads, in one-letter code: Atromentin synthetase (957 aa).

The adenylation (A) domain stretch occupies residues 59 to 464 (SVQARTFQDF…SGRIKDTVIV (406 aa)). One can recognise a Carrier domain in the interval 596-674 (TPSTDDEKAL…DLAKYVNGLV (79 aa)). The segment at 601–671 (DEKALAAIYA…IVSDLAKYVN (71 aa)) is thiolation and peptide carrier (T) domain. Ser-633 bears the O-(pantetheine 4'-phosphoryl)serine mark. Positions 697 to 947 (PIFFVHPGVG…FDHVPQFQKI (251 aa)) are thioesterase (TE) domain.

This sequence belongs to the ATP-dependent AMP-binding enzyme family.

It participates in secondary metabolite biosynthesis. The L-tyrosine:2-oxoglutarate aminotransferase atrD and the atromentin synthetase atrA catalyze consecutive steps to turn over L-tyrosine into atromentin, which represents the generic precursor molecule for the entire terphenylquinone and pulvinic acid family of pigments, which are widely distributed secondary metabolites in homobasidiomycetes. The first step is catalyzed by atrD which converts L-tyrosine in to 4-hydroxyphenylpyruvate (4-HPP). Adenylation of two 4-HPP monomers by the atrA adenylation (A) domain, ester bond formation between monomers and atrA, and symmetric C-C-bond formation between two monomers by atrA leads to atromentin. The sequence is that of Atromentin synthetase from Tapinella panuoides (Oyster rollrim mushroom).